The primary structure comprises 290 residues: Feruloyl esterase D (290 aa).

Residues Met1–Ala25 form the signal peptide. The segment at His260–Arg280 is disordered.

Belongs to the serine esterase family.

It is found in the secreted. It catalyses the reaction feruloyl-polysaccharide + H2O = ferulate + polysaccharide.. In terms of biological role, involved in degradation of plant cell walls. Hydrolyzes the feruloyl-arabinose ester bond in arabinoxylans as well as the feruloyl-galactose and feruloyl-arabinose ester bonds in pectin. Active against methyl esters of ferulate (MFA), sinapate (MSA), caffeate (MCA) and p-coumarate (MpCA). The protein is Feruloyl esterase D of Neurospora crassa (strain ATCC 24698 / 74-OR23-1A / CBS 708.71 / DSM 1257 / FGSC 987).